The following is a 581-amino-acid chain: Proteasome-associated ATPase (581 aa).

The segment at 1–28 is disordered; that stretch reads MTSSDLTQRKGLTMSDSTPDTPRSTPED. Polar residues predominate over residues 14–24; it reads MSDSTPDTPRS. The stretch at 27–66 forms a coiled coil; it reads EDAARRLAVLSAQNERLAQVLGEARGKIVELQQQIEEFAK. Position 248–253 (248–253) interacts with ATP; that stretch reads GCGKTL. Residues 561 to 581 are disordered; sequence GSGRSAAGRTIETATSTGQYL. Residues 572–581 show a composition bias toward polar residues; it reads ETATSTGQYL. The segment at 580–581 is docks into pockets in the proteasome alpha-ring; it reads YL.

This sequence belongs to the AAA ATPase family. As to quaternary structure, homohexamer. Assembles into a hexameric ring structure that caps the 20S proteasome core. Strongly interacts with the prokaryotic ubiquitin-like protein Pup through a hydrophobic interface; the interacting region of ARC lies in its N-terminal coiled-coil domain. There is one Pup binding site per ARC hexamer ring. Upon ATP-binding, the C-terminus of ARC interacts with the alpha-rings of the proteasome core, possibly by binding to the intersubunit pockets.

The protein operates within protein degradation; proteasomal Pup-dependent pathway. Its function is as follows. ATPase which is responsible for recognizing, binding, unfolding and translocation of pupylated proteins into the bacterial 20S proteasome core particle. May be essential for opening the gate of the 20S proteasome via an interaction with its C-terminus, thereby allowing substrate entry and access to the site of proteolysis. Thus, the C-termini of the proteasomal ATPase may function like a 'key in a lock' to induce gate opening and therefore regulate proteolysis. The protein is Proteasome-associated ATPase of Sanguibacter keddieii (strain ATCC 51767 / DSM 10542 / NCFB 3025 / ST-74).